Reading from the N-terminus, the 490-residue chain is MDAVLVLVFILSSLVFLSLWRQSSERRKLPPGPTPLPIIGNFLQIDVKNISGSLTNFSKVYGPVFTLYLGMKPTVVLHGYETVKEALIDHGEEFAGRGDFPMAERINKGLGIVFSNGNRWKEIRRFSLMTLRNLGMGKRNIEDRVQEEAQCLVEELRKTNGSPCDPTFILSCAPCNVICSIIFQNRFDYKDQDFLTFMKKVNENVRILSSPWLQVCNNFPSLIDYCPGSHHKITKNVNYLKKYILEKIEEHQESLDIENPRDFIDYYLIKLKQANHNQQSEFSLENLTTTVSDLFGAGTETTSTTLRYALLLLLKHPHVTAKVQEEIDQVVGRHRKPCMQDRSHMPYTDAMIHEVQRFIDLIPISLPHAVTCDIKFRDYFIPKGTTVITSLSSVLHDNKEFPNPEVFDPGHFLDKNGNFKKSDYFMPFSAGKRICAGEGLARMELFLFLTTILQNFKLKSMIHPKDIDTTPVVNGFASLPPSYQLCFIPV.

Cysteine 435 contacts heme.

It belongs to the cytochrome P450 family. Heme serves as cofactor.

It is found in the endoplasmic reticulum membrane. The protein localises to the microsome membrane. The enzyme catalyses an organic molecule + reduced [NADPH--hemoprotein reductase] + O2 = an alcohol + oxidized [NADPH--hemoprotein reductase] + H2O + H(+). In terms of biological role, catalyzes the hydroxylation of tolbutamide and the N-demethylation of aminopyrine and benzphetamine. Also has testosterone hydroxylase (16 beta) activity. This chain is Cytochrome P450 2C25 (CYP2C25), found in Mesocricetus auratus (Golden hamster).